The following is a 186-amino-acid chain: Translation initiation factor IF-3 (186 aa).

The segment at 1–20 is disordered; the sequence is MINRSAGKDRDRSRSGDKEL.

Belongs to the IF-3 family. Monomer.

The protein localises to the cytoplasm. Its function is as follows. IF-3 binds to the 30S ribosomal subunit and shifts the equilibrium between 70S ribosomes and their 50S and 30S subunits in favor of the free subunits, thus enhancing the availability of 30S subunits on which protein synthesis initiation begins. In Borrelia hermsii (strain HS1 / DAH), this protein is Translation initiation factor IF-3.